Reading from the N-terminus, the 66-residue chain is Xenoxin-2 (66 aa).

Cystine bridges form between Cys3–Cys24, Cys17–Cys37, Cys43–Cys58, and Cys59–Cys64.

As to expression, expressed by the skin dorsal glands.

The protein localises to the secreted. Its function is as follows. Lacks alpha-neurotoxic activity, has apparently no antibacterial activity, nor anti-coagulant potency. The polypeptide is Xenoxin-2 (Xenopus laevis (African clawed frog)).